An 81-amino-acid polypeptide reads, in one-letter code: Small ribosomal subunit protein bS16 (81 aa).

This sequence belongs to the bacterial ribosomal protein bS16 family.

This is Small ribosomal subunit protein bS16 from Acetivibrio thermocellus (strain ATCC 27405 / DSM 1237 / JCM 9322 / NBRC 103400 / NCIMB 10682 / NRRL B-4536 / VPI 7372) (Clostridium thermocellum).